The chain runs to 151 residues: Macrodomain Ter protein (151 aa).

It belongs to the MatP family. In terms of assembly, homodimer.

The protein localises to the cytoplasm. Functionally, required for spatial organization of the terminus region of the chromosome (Ter macrodomain) during the cell cycle. Prevents early segregation of duplicated Ter macrodomains during cell division. Binds specifically to matS, which is a 13 bp signature motif repeated within the Ter macrodomain. This Escherichia fergusonii (strain ATCC 35469 / DSM 13698 / CCUG 18766 / IAM 14443 / JCM 21226 / LMG 7866 / NBRC 102419 / NCTC 12128 / CDC 0568-73) protein is Macrodomain Ter protein.